The primary structure comprises 189 residues: dCTP deaminase (189 aa).

DCTP-binding positions include 112–117 (KSTYAR), 136–138 (TLE), Gln157, Tyr171, and Gln181. Glu138 acts as the Proton donor/acceptor in catalysis.

Belongs to the dCTP deaminase family. In terms of assembly, homotrimer.

It carries out the reaction dCTP + H2O + H(+) = dUTP + NH4(+). Its pathway is pyrimidine metabolism; dUMP biosynthesis; dUMP from dCTP (dUTP route): step 1/2. Catalyzes the deamination of dCTP to dUTP. This is dCTP deaminase from Burkholderia orbicola (strain MC0-3).